The chain runs to 159 residues: Transcription elongation factor GreA (159 aa).

A coiled-coil region spans residues 1–76; the sequence is MAEEKEVVLT…SLEKTLKKAR (76 aa).

Belongs to the GreA/GreB family.

Necessary for efficient RNA polymerase transcription elongation past template-encoded arresting sites. The arresting sites in DNA have the property of trapping a certain fraction of elongating RNA polymerases that pass through, resulting in locked ternary complexes. Cleavage of the nascent transcript by cleavage factors such as GreA or GreB allows the resumption of elongation from the new 3'terminus. GreA releases sequences of 2 to 3 nucleotides. This chain is Transcription elongation factor GreA, found in Syntrophomonas wolfei subsp. wolfei (strain DSM 2245B / Goettingen).